We begin with the raw amino-acid sequence, 187 residues long: MISSNDFRTGTTIEIDGAVWRVVEFLHVKPGKGSAFVRTKLKAVKSGNVVEKTFRAGEMLPQAMLEKSSLQHTYMEGEDYVFMDMATYEETRLSADQIGESRKYLKEGMEVNVVSWNDTPLEVELPNSVVLEIKETDPGVKGDTATGGTKPAILETGAQVMVPLFLSVGEKIKVDTRNDSYLGRENG.

Belongs to the elongation factor P family.

Its subcellular location is the cytoplasm. Its pathway is protein biosynthesis; polypeptide chain elongation. Involved in peptide bond synthesis. Stimulates efficient translation and peptide-bond synthesis on native or reconstituted 70S ribosomes in vitro. Probably functions indirectly by altering the affinity of the ribosome for aminoacyl-tRNA, thus increasing their reactivity as acceptors for peptidyl transferase. The protein is Elongation factor P of Synechococcus sp. (strain CC9605).